Reading from the N-terminus, the 241-residue chain is Small ribosomal subunit protein uS3 (241 aa).

A KH type-2 domain is found at 39-107 (IRTYLKKELY…PLSVNIKEEK (69 aa)). The interval 214–241 (AEVKEEQQKEGARRPKRAPKRENSGKAE) is disordered. The segment covering 215-226 (EVKEEQQKEGAR) has biased composition (basic and acidic residues).

This sequence belongs to the universal ribosomal protein uS3 family. As to quaternary structure, part of the 30S ribosomal subunit. Forms a tight complex with proteins S10 and S14.

In terms of biological role, binds the lower part of the 30S subunit head. Binds mRNA in the 70S ribosome, positioning it for translation. The protein is Small ribosomal subunit protein uS3 of Sulfurimonas denitrificans (strain ATCC 33889 / DSM 1251) (Thiomicrospira denitrificans (strain ATCC 33889 / DSM 1251)).